The following is a 751-amino-acid chain: Ribosomal RNA large subunit methyltransferase K/L (751 aa).

The region spanning 44-155 (LAYRTCLWSR…KNKLVLSIDL (112 aa)) is the THUMP domain.

This sequence belongs to the methyltransferase superfamily. RlmKL family.

Its subcellular location is the cytoplasm. The catalysed reaction is guanosine(2445) in 23S rRNA + S-adenosyl-L-methionine = N(2)-methylguanosine(2445) in 23S rRNA + S-adenosyl-L-homocysteine + H(+). The enzyme catalyses guanosine(2069) in 23S rRNA + S-adenosyl-L-methionine = N(2)-methylguanosine(2069) in 23S rRNA + S-adenosyl-L-homocysteine + H(+). In terms of biological role, specifically methylates the guanine in position 2445 (m2G2445) and the guanine in position 2069 (m7G2069) of 23S rRNA. The sequence is that of Ribosomal RNA large subunit methyltransferase K/L from Cellvibrio japonicus (strain Ueda107) (Pseudomonas fluorescens subsp. cellulosa).